Here is a 509-residue protein sequence, read N- to C-terminus: Probable cytochrome P450 513A1 (509 aa).

A helical membrane pass occupies residues 2–19 (NYLVGLVLIFTIFYFFLQ). A heme-binding site is contributed by C454.

This sequence belongs to the cytochrome P450 family. Heme serves as cofactor.

It localises to the membrane. This is Probable cytochrome P450 513A1 (cyp513A1) from Dictyostelium discoideum (Social amoeba).